The following is a 4427-amino-acid chain: MSSKAEKKQRLSGRGSSQASWSGRATRAAVATQEQGNAPAVSEPELQAELPKEEPEPRLEGPQAQSEESVEPEADVKPLFLSRAALTGLADAVWTQEHDAILEHFAQDPTESILTIFIDPCFGLKLELGMPVQTQNQLVYFIRQAPVPITWENFEATVQFGTVRGPYIPALLRLLGGVFAPQIFANTGWPESIRNHFASHLHKFLACLTDTRYKLEGHTVLYIPAEAMNMKPEMVIKDKELVQRLETSMIHWTRQIKEMLSAQETVETGENLGPLEEIEFWRNRCMDLSGISKQLVKKGVKHVESILHLAKSSYLAPFMKLAQQIQDGSRQAQSNLTFLSILKEPYQELAFMKPKDISSKLPKLISLIRIIWVNSPHYNTRERLTSLFRKVCDCQYHFARWEDGKQGPLPCFFGAQGPQITRNLLEIEDIFHKNLHTLRAVRGGILDVKNTCWHEDYNKFRAGIKDLEVMTQNLITSAFELVRDVPHGVLLLDTFHRLASREAIKRTYDKKAVDLYMLFNSELALVNRERNKKWPDLEPYVAQYSGKARWVHILRRRIDRVMTCLAGAHFLPRIGTGKESVHTYQQMVQAIDELVRKTFQEWTSSLDKDCIRRLDTPLLRISQEKAGMLDVNFDKSLLILFAEIDYWERLLFETPHYVVNVAERAEDLRILRENLLLVARDYNRIIAMLSPDEQALFKERIRLLDKKIHPGLKKLHWALKGASAFFITECRIHASKVQMIVNEFKASTLTIGWRAQEMSEKLLVRISGKRVYRDLEFEEDQREHRAAVQQKLMNLHQDVVTIMTNSYEVFKNDGPEIQQQWMLYMIRLDRMMEDALRLNVKWSLLELSKAINGDGKTSPNPLFQVLVILKNDLQGSVAQVEFSPTLQTLAGVVNDIGNHLFSTISVFCHLPDILTKRKLHREPIQTVVEQDEDIKKIQTQISSGMTNNASLLQNYLKTWDMYREIWEINKDSFIHRYQRLNPPVSSFVADIARYTEVANNVQKEETVTNIQFVLLDCSHLKFSLVQHCNEWQNKFATLLREMAAGRLLELHTYLKENAEKISRPPQTLEELGVSLQLVDALKHDLANVETQIPPIHEQFAILEKYEVPVEDSVLEMLDSLNGEWVVFQQTLLDSKQMLKKHKEKFKTGLIHSADDFKKKAHTLLEDFEFKGHFTSNVGYMSALDQITQVRAMLMAMREEENSLRANLGIFKIEQPPSKDLQNLEKELDALQQIWEIARDWEENWNEWKTGRFLILQTETMETTAHGLFRRLTKLAKEYKDRNWEIIETTRSKIEQFKRTMPLISDLRNPALRERHWDQVRDEIQREFDQESESFTLEQIVELGMDQHVEKIGEISASATKELAIEVALQNIAKTWDVTQLDIVPYKDKGHHRLRGTEEVFQALEDNQVALSTMKASRFVKAFEKDVDHWERCLSLILEVIEMILTVQRQWMYLENIFLGEDIRKQLPNESTLFDQVNSNWKAIMDRMNKDNNALRSTHHPGLLDTLIEMNTILEDIQKSLDMYLETKRHIFPRFYFLSNDDLLEILGQSRNPEAVQPHLKKCFDNIKLLRIQKVGGPSSKWEAVGMFSGDGEYIDFLHSVFLEGPVESWLGDVEQTMRVTLRDLLRNCHLALRKFLNKRDKWVKEWAGQVVITASQIQWTADVTKCLLTAKERADKKILKVMKKNQVSILNKYSEAIRGNLTKIMRLKIVALVTIEIHARDVLEKLYKSGLMDVNSFDWLSQLRFYWEKDLDDCVIRQTNTQFQYNYEYLGNSGRLVITPLTDRCYMTLTTALHLHRGGSPKGPAGTGKTETVKDLGKALGIYVIVVNCSEGLDYKSMGRMYSGLAQTGAWGCFDEFNRINIEVLSVVAHQILCILSALAAGLTHFHFDGFEINLVWSCGIFITMNPGYAGRTELPENLKSMFRPIAMVVPDSTLIAEIILFGEGFGNCKILAKKVYTLYSLAVQQLSRQDHYDFGLRALTSLLRYAGKKRRLQPDLTDEEVLLLSMRDMNIAKLTSVDAPLFNAIVQDLFPNIELPVIDYGKLRETVEQEIRDMGLQSTPFTLTKVFQLYETKNSRHSTMIVGCTGSGKTASWRILQASLSSLCRAGDPNFNIVREFPLNPKALSLGELYGEYDLSTNEWTDGILSSVMRTACADEKPDEKWILFDGPVDTLWIENMNSVMDDNKVLTLINGERIAMPEQVSLLFEVEDLAMASPATVSRCGMVYTDYADLGWKPYVQSWLEKRPKAEVEPLQRMFEKLINKMLAFKKDNCKELVPLPEYSGITSLCKLYSALATPENGVNPADGENYVTMVEMTFVFSMIWSVCASVDEEGRKRIDSYLREIEGSFPNKDTVYEYFVDPKIRSWTSFEDKLPKSWRYPPNAPFYKIMVPTVDTVRYNYLVSSLVANQNPILLVGPVGTGKTSIAQSVLQSLPSSQWSVLVVNMSAQTTSNNVQSIIESRVEKRTKGVYVPFGGKSMITFMDDLNMPAKDMFGSQPPLELIRLWIDYGFWYDRTKQTIKYIREMFLMAAMGPPGGGRTVISPRLRSRFNIINMTFPTKSQIIRIFGTMINQKLQDFEEEVKPIGNVVTEATLDMYNTVVQRFLPTPTKMHYLFNLRDISKVFQGMLRANKDFHDTKSSITRLWIHECFRVFSDRLVDAADTEAFMGIISDKLGSFFDLTFHHLCPSKRPPIFGDFLKEPKVYEDLTDLTVLKTVMETALNEYNLSPSVVPMQLVLFREAIEHITRIVRVIGQPRGNMLLVGIGGSGRQSLARLASSICDYTTFQIEVTKHYRKQEFRDDIKRLYRQAGVELKTTSFIFVDTQIADESFLEDINNILSSGEVPNLYKPDEFEEIQSHIIDQARVEQVPESSDSLFAYLIERVQNNLHIVLCLSPMGDPFRNWIRQYPALVNCTTINWFSEWPQEALLEVAEKCLIGVDLGTQENIHRKVAQIFVTMHWSVAQYSQKMLLELRRHNYVTPTKYLELLSGYKKLLGEKRQELLAQANKLRTGLFKIDETREKVQVMSLELEDAKKKVAEFQKQCEEYLVIIVQQKREADEQQKAVTANSEKIAVEEIKCQALADNAQKDLEEALPALEEAMRALESLNKKDIGEIKSYGRPPAQVEIVMQAVMILRGNEPTWAEAKRQLGEQNFIKSLINFDKDNISDKVLKKIGAYCAQPDFQPDIIGRVSLAAKSLCMWVRAMELYGRLYRVVEPKRIRMNAALAQLREKQAALAEAQEKLREVAEKLEMLKKQYDEKLAQKEELRKKSEEMELKLERAGMLVSGLAGEKARWEETVQGLEEDLGYLVGDCLLAAAFLSYMGPFLTNYRDEIVNQIWIGKIWELQVPCSPSFAIDNFLCNPTKVRDWNIQGLPSDAFSTENGIIVTRGNRWALMIDPQAQALKWIKNMEGGQGLKIIDLQMSDYLRILEHAIHFGYPVLLQNVQEYLDPTLNPMLNKSVARIGGRLLMRIGDKEVEYNTNFRFYITTKLSNPHYSPETSAKTTIVNFAVKEQGLEAQLLGIVVRKERPELEEQKDSLVINIAAGKRKLKELEDEILRLLNEATGSLLDDVQLVNTLHTSKITATEVTEQLETSETTEINTDLAREAYRPCAQRASILFFVLNDMGCIDPMYQFSLDAYISLFILSIDKSHRSNKLEDRIDYLNDYHTYAVYRYTCRTLFERHKLLFSFHMCAKILETSGKLNMDEYNFFLRGGVVLDREGQMDNPCSSWLADAYWDNITELDKLTNFHGLMNSFEQYPRDWHLWYTNAAPEKAMLPGEWENACNEMQRMLIVRSLRQDRVAFCVTSFIITNLGSRFIEPPVLNMKSVLEDSTPRSPLVFILSPGVDPTSALLQLAEHMGMAQRFHALSLGQGQAPIAARLLREGVTQGHWVFLANCHLSLSWMPNLDKLVEQLQVEDPHPSFRLWLSSIPHPDFPISILQVSIKMTTEPPKGLKANMTRLYQLMSEPQFSRCSKPAKYKKLLFSLCFFHSVLLERKKFLQLGWNIIYGFNDSDFEVSENLLSLYLDEYEETPWDALKYLIAGINYGGHVTDDWDRRLLTTYINDYFCDQSLSTPFHRLSALETYFIPKDGSLASYKEYISLLPGMDPPEAFGQHPNADVASQITEAQTLFDTLLSLQPQITPTRAGGQTREEKVLELAADVKQKIPEMIDYEGTQKLLALDPSPLNVVLLQEIQRYNTLMQTILFSLTDLEKGIQGLIVMSTSLEEIFNCIFDAHVPPLWGKAYPSQKPLAAWTRDLAMRVEQFELWASRARPPVIFWLSGFTFPTGFLTAVLQSSARQNNVSVDSLSWEFIVSTVDDSNLVYPPKDGVWVRGLYLEGAGWDRKNSCLVEAEPMQLVCLMPTIHFRPAESRKKSAKGMYSCPCYYYPNRAGSSDRASFVIGIDLRSGAMTPDHWIKRGTALLMSLDS.

A disordered region spans residues 1 to 73 (MSSKAEKKQR…AQSEESVEPE (73 aa)). Residues 1 to 1764 (MSSKAEKKQR…VIRQTNTQFQ (1764 aa)) form a stem region. Over residues 14–23 (RGSSQASWSG) the composition is skewed to polar residues. Residues 50–59 (LPKEEPEPRL) show a composition bias toward basic and acidic residues. The stretch at 1404 to 1439 (EDNQVALSTMKASRFVKAFEKDVDHWERCLSLILEV) is one TPR 1 repeat. 4 AAA regions span residues 1765–1986 (YNYE…LLRY), 2046–2273 (ETVE…DNCK), 2378–2625 (RYPP…VFQG), and 2722–2974 (EYNL…LRRH). Residues 1803-1810 (GPAGTGKT), 2084-2091 (GCTGSGKT), and 2416-2423 (GPVGTGKT) contribute to the ATP site. A TPR 2 repeat occupies 2721-2754 (NEYNLSPSVVPMQLVLFREAIEHITRIVRVIGQP). 2762-2769 (GIGGSGRQ) is a binding site for ATP. The stalk stretch occupies residues 2989 to 3272 (YKKLLGEKRQ…EELRKKSEEM (284 aa)). Positions 3012 to 3049 (FKIDETREKVQVMSLELEDAKKKVAEFQKQCEEYLVII) form a coiled coil. The TPR 3 repeat unit spans residues 3072-3105 (VEEIKCQALADNAQKDLEEALPALEEAMRALESL). Coiled-coil stretches lie at residues 3216-3304 (KRIR…EEDL) and 3523-3567 (VRKE…GSLL). AAA stretches follow at residues 3358–3588 (LCNP…EVTE) and 3804–4023 (VTSF…LLSL). 2 TPR repeats span residues 4072–4104 (STPF…LLPG) and 4105–4140 (MDPP…QPQI).

This sequence belongs to the dynein heavy chain family. As to quaternary structure, part of the axonemal inner dynein arm complex that consists of at least two heavy chains and a number of intermediate and light chains. Interacts with DNAI4. Expressed primarily in trachea and testis, 2 tissues containing axonemal structures. Also expressed in lung. Expressed in spermatozoa (at protein level).

It is found in the cytoplasm. The protein localises to the cytoskeleton. Its subcellular location is the cilium axoneme. It localises to the flagellum axoneme. As part of the axonemal inner dynein arm complex plays a central role in ciliary beat. Expressed in sperm flagellum, it is required for sperm motility. Dyneins are microtubule-based molecular motors possessing ATPase activities that can convert the chemical energy of ATP into relative sliding between adjacent microtubule doublets to generate ciliary bending. This chain is Dynein axonemal heavy chain 2, found in Homo sapiens (Human).